Reading from the N-terminus, the 582-residue chain is SHC-transforming protein 2 (582 aa).

Disordered stretches follow at residues 1-24 (MTQG…APTT) and 47-70 (GPAA…AGPG). Residues 8–20 (RAPPAPPAPPEPE) show a composition bias toward pro residues. One can recognise a PID domain in the interval 147–329 (LGPGVSYVVR…AGPEESAWGD (183 aa)). Residues 330 to 486 (EEDSLEHNYY…PTEEQLRQEP (157 aa)) form a CH1 region. Phosphotyrosine occurs at positions 338, 339, and 414. Positions 460–481 (PLEDQWPSPPTRRAPVAPTEEQ) are disordered. Positions 487–578 (WYHGRMSRRA…ESELHLRGVV (92 aa)) constitute an SH2 domain.

In terms of assembly, interacts with the Trk receptors in a phosphotyrosine-dependent manner and MEGF12. Once activated, binds to GRB2. In terms of processing, phosphorylated on tyrosines by the Trk receptors. As to expression, expressed in brain. Expressed at high level in the hypothalamus and at low level in the caudate nucleus.

Functionally, signaling adapter that couples activated growth factor receptors to signaling pathway in neurons. Involved in the signal transduction pathways of neurotrophin-activated Trk receptors in cortical neurons. In Homo sapiens (Human), this protein is SHC-transforming protein 2 (SHC2).